A 311-amino-acid polypeptide reads, in one-letter code: MALPIIIDCDPGHDDAIALVLALASPELEVKAITSSAGNQTPEKTLRNVLRMLTLLKRPDIPVAGGAVKPLMRELIIADNVHGESGLDGPALPEPSFAPQSGTAVELMAKTLRESAQPVTIVSTGPQTNVALLLNSHPELHTKIARIVIMGGAMGLGNWTPAAEFNIYVDPEAAEIVFQSGIPVVMAGLDVTHKAQIHAADIERFRDIGNPISTIVAELLDFFFEYHKDEKWGFVGAPLHAPCTIAWLLKPEIFTTVERWVGVETKGKYTQGMTVVDYYFLTGNKPNATVMVDVDRQGFVDLLAERLQYYA.

His240 is an active-site residue.

Belongs to the IUNH family. RihA subfamily.

Hydrolyzes cytidine or uridine to ribose and cytosine or uracil, respectively. In Salmonella choleraesuis (strain SC-B67), this protein is Pyrimidine-specific ribonucleoside hydrolase RihA.